The following is a 144-amino-acid chain: Nucleoside diphosphate kinase (144 aa).

ATP contacts are provided by K11, F59, R87, T93, R104, and N114. H117 functions as the Pros-phosphohistidine intermediate in the catalytic mechanism.

It belongs to the NDK family. In terms of assembly, homotetramer. It depends on Mg(2+) as a cofactor.

The protein resides in the cytoplasm. The catalysed reaction is a 2'-deoxyribonucleoside 5'-diphosphate + ATP = a 2'-deoxyribonucleoside 5'-triphosphate + ADP. It catalyses the reaction a ribonucleoside 5'-diphosphate + ATP = a ribonucleoside 5'-triphosphate + ADP. Functionally, major role in the synthesis of nucleoside triphosphates other than ATP. The ATP gamma phosphate is transferred to the NDP beta phosphate via a ping-pong mechanism, using a phosphorylated active-site intermediate. This is Nucleoside diphosphate kinase from Vibrio atlanticus (strain LGP32) (Vibrio splendidus (strain Mel32)).